The sequence spans 103 residues: Growth-regulated alpha protein (103 aa).

Residues 1-30 form the signal peptide; that stretch reads MARAANPAPRLLGAAMLLLLLVAAGRRAAG. Cystine bridges form between cysteine 39–cysteine 65 and cysteine 41–cysteine 81.

This sequence belongs to the intercrine alpha (chemokine CxC) family.

It is found in the secreted. In terms of biological role, has chemotactic activity for neutrophils. The polypeptide is Growth-regulated alpha protein (CXCL1) (Ovis aries (Sheep)).